Reading from the N-terminus, the 875-residue chain is Alanine--tRNA ligase (875 aa).

The Zn(2+) site is built by His-564, His-568, Cys-666, and His-670.

This sequence belongs to the class-II aminoacyl-tRNA synthetase family. Homotetramer. It depends on Zn(2+) as a cofactor.

It localises to the cytoplasm. The catalysed reaction is tRNA(Ala) + L-alanine + ATP = L-alanyl-tRNA(Ala) + AMP + diphosphate. Functionally, catalyzes the attachment of alanine to tRNA(Ala) in a two-step reaction: alanine is first activated by ATP to form Ala-AMP and then transferred to the acceptor end of tRNA(Ala). Also edits incorrectly charged Ser-tRNA(Ala) and Gly-tRNA(Ala) via its editing domain. The protein is Alanine--tRNA ligase of Yersinia pseudotuberculosis serotype O:1b (strain IP 31758).